The chain runs to 1006 residues: Zinc finger protein ZFPM1 (1006 aa).

The span at 1-13 (MSRRKQSNPRQIK) shows a compositional bias: basic residues. Disordered stretches follow at residues 1 to 93 (MSRR…DELE) and 114 to 133 (SWGP…RQAE). Residues 15 to 25 (SLGDMEAREEV) are compositionally biased toward basic and acidic residues. Over residues 42–62 (APSPPSADVNSPPPLPPPTSP) the composition is skewed to pro residues. Residues 66-79 (KELEGQEPEPRPTE) are compositionally biased toward basic and acidic residues. Ser-84 and Ser-128 each carry phosphoserine. The span at 121-130 (SVQTRASSPR) shows a compositional bias: polar residues. The CCHC FOG-type 1 zinc finger occupies 235-268 (VINKDVFPCKDCGIWYRSERNLQAHLLYYCASRQ). Zn(2+) is bound by residues Cys-243, Cys-246, His-259, and Cys-264. The residue at position 272 (Ser-272) is a Phosphoserine. C2H2-type zinc fingers lie at residues 290–314 (RVCP…MRSH), 320–342 (FVCL…LKVH), and 348–371 (GVCH…VTNH). The segment at 330–341 (TTKANCERHLKV) is interaction with TACC3. The residue at position 384 (Ser-384) is a Phosphoserine. Disordered regions lie at residues 384-409 (SPGA…HTAL), 438-460 (NGEA…AAPR), and 473-515 (APIL…SPVP). The span at 485-515 (APSRTPSPRSPAPARVKAELSSPTPGSSPVP) shows a compositional bias: low complexity. Ser-491 and Ser-494 each carry phosphoserine. Residues 571–604 (PGAPKGATCFECEITFSNVNNYYVHKRLYCSGRR) form a CCHC FOG-type 2 zinc finger. Residues Cys-579, Cys-582, His-595, and Cys-600 each contribute to the Zn(2+) site. The disordered stretch occupies residues 605-681 (APEDAPAARR…SVDDAEDDPS (77 aa)). The segment covering 617–629 (APPGPARAPPGQP) has biased composition (pro residues). 2 positions are modified to phosphoserine: Ser-638 and Ser-671. The CCHC FOG-type 3 zinc finger occupies 677–710 (EDDPSRTLCEACNIRFSRHETYTVHKRYYCASRH). Zn(2+) contacts are provided by Cys-685, Cys-688, His-701, and Cys-706. The interval 708–810 (SRHDPPPRRP…PRRPLPGAPA (103 aa)) is disordered. Composition is skewed to pro residues over residues 715–735 (RRPA…PSPA) and 754–769 (APPP…PESP). Positions 780-791 (GLAPARSPGPAA) are enriched in low complexity. Ser-786 is modified (phosphoserine). The segment at 794-800 (PIDLSKK) is interaction with CTBP2. The CCHC FOG-type 4 zinc-finger motif lies at 811–844 (PALADYHECTACRVSFHSLEAYLAHKKYSCPAAP). Positions 819, 822, 835, and 840 each coordinate Zn(2+). Residues 854 to 877 (AACPYCPPNGPVRGDLLEHFRLAH) form a C2H2-type 4 zinc finger. The disordered stretch occupies residues 889-971 (GVEARTPADR…KGTPAPLPNG (83 aa)). Residues Ser-901, Ser-909, Ser-914, and Ser-935 each carry the phosphoserine modification. The span at 925–950 (PQEPPPGPPPSPAAAPEAVPPPPAPP) shows a compositional bias: pro residues. The CCHC FOG-type 5 zinc-finger motif lies at 968–1001 (LPNGNHRYCRLCNIKFSSLSTFIAHKKYYCSSHA). Cys-976, Cys-979, His-992, and Cys-997 together coordinate Zn(2+).

This sequence belongs to the FOG (Friend of GATA) family. In terms of assembly, interacts with corepressor CTBP2; this interaction is however not essential for corepressor activity. Interacts with the N-terminal zinc-finger of GATA1, GATA2 and probably GATA3. Mainly expressed in hematopoietic tissues. Also expressed in adult cerebellum, stomach, lymph node, liver and pancreas. Expressed in fetal heart, liver and spleen.

It localises to the nucleus. In terms of biological role, transcription regulator that plays an essential role in erythroid and megakaryocytic cell differentiation. Essential cofactor that acts via the formation of a heterodimer with transcription factors of the GATA family GATA1, GATA2 and GATA3. Such heterodimer can both activate or repress transcriptional activity, depending on the cell and promoter context. The heterodimer formed with GATA proteins is essential to activate expression of genes such as NFE2, ITGA2B, alpha- and beta-globin, while it represses expression of KLF1. May be involved in regulation of some genes in gonads. May also be involved in cardiac development, in a non-redundant way with ZFPM2/FOG2. This Homo sapiens (Human) protein is Zinc finger protein ZFPM1 (ZFPM1).